Reading from the N-terminus, the 450-residue chain is Glutamyl-tRNA(Gln) amidotransferase subunit A, mitochondrial (450 aa).

Active-site charge relay system residues include K47 and S122. The active-site Acyl-ester intermediate is S146.

It belongs to the amidase family. GatA subfamily. In terms of assembly, subunit of the heterotrimeric GatFAB amidotransferase (AdT) complex, composed of A, B and F subunits.

It is found in the mitochondrion. The enzyme catalyses L-glutamyl-tRNA(Gln) + L-glutamine + ATP + H2O = L-glutaminyl-tRNA(Gln) + L-glutamate + ADP + phosphate + H(+). Functionally, allows the formation of correctly charged Gln-tRNA(Gln) through the transamidation of misacylated Glu-tRNA(Gln) in the mitochondria. The reaction takes place in the presence of glutamine and ATP through an activated gamma-phospho-Glu-tRNA(Gln). This chain is Glutamyl-tRNA(Gln) amidotransferase subunit A, mitochondrial, found in Candida albicans (strain WO-1) (Yeast).